A 476-amino-acid chain; its full sequence is Light-independent protochlorophyllide reductase subunit N (476 aa).

3 residues coordinate [4Fe-4S] cluster: Cys-31, Cys-56, and Cys-116.

It belongs to the BchN/ChlN family. As to quaternary structure, protochlorophyllide reductase is composed of three subunits; ChlL, ChlN and ChlB. Forms a heterotetramer of two ChlB and two ChlN subunits. It depends on [4Fe-4S] cluster as a cofactor.

The protein resides in the plastid. It localises to the chloroplast. It carries out the reaction chlorophyllide a + oxidized 2[4Fe-4S]-[ferredoxin] + 2 ADP + 2 phosphate = protochlorophyllide a + reduced 2[4Fe-4S]-[ferredoxin] + 2 ATP + 2 H2O. It participates in porphyrin-containing compound metabolism; chlorophyll biosynthesis (light-independent). Its function is as follows. Component of the dark-operative protochlorophyllide reductase (DPOR) that uses Mg-ATP and reduced ferredoxin to reduce ring D of protochlorophyllide (Pchlide) to form chlorophyllide a (Chlide). This reaction is light-independent. The NB-protein (ChlN-ChlB) is the catalytic component of the complex. This chain is Light-independent protochlorophyllide reductase subunit N, found in Staurastrum punctulatum (Green alga).